The sequence spans 715 residues: Patatin-like phospholipase domain-containing protein ATEG_02594 (715 aa).

A helical membrane pass occupies residues 84-104 (WPFLAFVLGWISFLGVAYILT). Residues 274–465 (LCLSGGATFA…RTDIPIKALN (192 aa)) form the PNPLA domain. Residues 305–309 (GTSGG) carry the GXSXG motif. The active-site Nucleophile is the Ser307. Asp452 (proton acceptor) is an active-site residue. The segment at 613 to 715 (TAPRGGGRAT…DVDSDTWKGQ (103 aa)) is disordered. The span at 652–661 (RTGEYSKEAD) shows a compositional bias: basic and acidic residues. Residues 665–678 (AEMSDSSGVDSATA) are compositionally biased toward polar residues.

Belongs to the PLPL family.

Its subcellular location is the membrane. Functionally, probable lipid hydrolase. The sequence is that of Patatin-like phospholipase domain-containing protein ATEG_02594 from Aspergillus terreus (strain NIH 2624 / FGSC A1156).